Here is a 241-residue protein sequence, read N- to C-terminus: MNFTEGCEATGRRPGSAGSRRRRAPRPGPVALLPLLLPLLLPPAAAVPLPAAADSSGEVGLEEEAGARRALLDCEPLARVLRDRAVQLQDEMCKKFTVCENSMEMLVRNNLNLPKVTEEDGCLLAGFDEEKCLTKLSSGLFAFQTYLEFIQETFDSEKQNVESLCYSTKHLAATIRQMVINPDEVVIPDSAAQKSLLANLKSDKDWIEKITMHLILRDFTSFMEKTVRAVRYLKKTRSFSA.

The tract at residues 1–25 is disordered; that stretch reads MNFTEGCEATGRRPGSAGSRRRRAP. An N-terminal signal peptide occupies residues 1–46; sequence MNFTEGCEATGRRPGSAGSRRRRAPRPGPVALLPLLLPLLLPPAAA. The cysteines at positions 122 and 132 are disulfide-linked.

It belongs to the IL-6 superfamily. Component of a hexamer of two molecules each of IL6, IL6R and IL6ST; first binds to IL6R to associate with the signaling subunit IL6ST.

The protein resides in the secreted. Cytokine with a wide variety of biological functions in immunity, tissue regeneration, and metabolism. Binds to IL6R, then the complex associates to the signaling subunit IL6ST/gp130 to trigger the intracellular IL6-signaling pathway. The interaction with the membrane-bound IL6R and IL6ST stimulates 'classic signaling', whereas the binding of IL6 and soluble IL6R to IL6ST stimulates 'trans-signaling'. Alternatively, 'cluster signaling' occurs when membrane-bound IL6:IL6R complexes on transmitter cells activate IL6ST receptors on neighboring receiver cells. The polypeptide is Interleukin-6 (IL6) (Gallus gallus (Chicken)).